We begin with the raw amino-acid sequence, 117 residues long: Ig heavy chain V region 345 (117 aa).

Positions 1–19 (MNFGLRLIFLVLTLKGVKC) are cleaved as a signal peptide. The interval 20–49 (EVQLVESGGGLVKPGGSLKLSCAASGFAFS) is framework-1. A disulfide bridge links cysteine 41 with cysteine 115. Positions 50–54 (SYDMS) are complementarity-determining-1. Positions 55–68 (WVRQTPEKRLEWVA) are framework-2. The segment at 69-85 (YISSGGGSTYYPDTVKG) is complementarity-determining-2. Residues 86–117 (RFTISRDNAKNTLYLQMSSLKSEDTAMYYCAR) form a framework-3 region.

This Mus musculus (Mouse) protein is Ig heavy chain V region 345.